The following is a 78-amino-acid chain: Translation initiation factor IF-1, chloroplastic (78 aa).

The region spanning 1-72 (MEKQNLIDME…TKGRITYRLR (72 aa)) is the S1-like domain.

It belongs to the IF-1 family. As to quaternary structure, component of the 30S ribosomal translation pre-initiation complex which assembles on the 30S ribosome in the order IF-2 and IF-3, IF-1 and N-formylmethionyl-tRNA(fMet); mRNA recruitment can occur at any time during PIC assembly.

Its subcellular location is the plastid. The protein localises to the chloroplast. Its function is as follows. One of the essential components for the initiation of protein synthesis. Stabilizes the binding of IF-2 and IF-3 on the 30S subunit to which N-formylmethionyl-tRNA(fMet) subsequently binds. Helps modulate mRNA selection, yielding the 30S pre-initiation complex (PIC). Upon addition of the 50S ribosomal subunit IF-1, IF-2 and IF-3 are released leaving the mature 70S translation initiation complex. The chain is Translation initiation factor IF-1, chloroplastic from Anthoceros angustus (Hornwort).